The following is a 158-amino-acid chain: Transcription elongation factor GreA (158 aa).

Belongs to the GreA/GreB family.

Its function is as follows. Necessary for efficient RNA polymerase transcription elongation past template-encoded arresting sites. The arresting sites in DNA have the property of trapping a certain fraction of elongating RNA polymerases that pass through, resulting in locked ternary complexes. Cleavage of the nascent transcript by cleavage factors such as GreA or GreB allows the resumption of elongation from the new 3'terminus. GreA releases sequences of 2 to 3 nucleotides. The chain is Transcription elongation factor GreA from Rhizobium johnstonii (strain DSM 114642 / LMG 32736 / 3841) (Rhizobium leguminosarum bv. viciae).